The chain runs to 147 residues: Protein MioC (147 aa).

Positions Ile-4–Val-143 constitute a Flavodoxin-like domain.

It belongs to the flavodoxin family. MioC subfamily. Homodimer. FMN serves as cofactor.

Probable electron transporter required for biotin synthase activity. This is Protein MioC (mioC) from Escherichia coli (strain K12).